The sequence spans 214 residues: Inner membrane-spanning protein YciB (214 aa).

5 consecutive transmembrane segments (helical) span residues 11 to 31 (ILFF…VAII), 50 to 70 (MHII…ILQD), 81 to 101 (VNWG…KPII), 119 to 139 (LSYM…YVAY), and 149 to 169 (FKLF…GVYI).

Belongs to the YciB family.

It localises to the cell inner membrane. In terms of biological role, plays a role in cell envelope biogenesis, maintenance of cell envelope integrity and membrane homeostasis. The chain is Inner membrane-spanning protein YciB from Hydrogenovibrio crunogenus (strain DSM 25203 / XCL-2) (Thiomicrospira crunogena).